Here is a 268-residue protein sequence, read N- to C-terminus: Tryptophan synthase alpha chain (268 aa).

Residues Glu49 and Asp60 each act as proton acceptor in the active site.

This sequence belongs to the TrpA family. Tetramer of two alpha and two beta chains.

The catalysed reaction is (1S,2R)-1-C-(indol-3-yl)glycerol 3-phosphate + L-serine = D-glyceraldehyde 3-phosphate + L-tryptophan + H2O. It functions in the pathway amino-acid biosynthesis; L-tryptophan biosynthesis; L-tryptophan from chorismate: step 5/5. Functionally, the alpha subunit is responsible for the aldol cleavage of indoleglycerol phosphate to indole and glyceraldehyde 3-phosphate. The sequence is that of Tryptophan synthase alpha chain from Haemophilus influenzae (strain ATCC 51907 / DSM 11121 / KW20 / Rd).